A 527-amino-acid chain; its full sequence is Protein Lilipod (527 aa).

Residues 1-22 are Extracellular-facing; that stretch reads MDEEEEEEVTDLKLQLFHNTVR. The helical transmembrane segment at 23 to 43 threads the bilayer; that stretch reads EHIIFLLLIILLYSSSYVVVS. Over 44 to 65 the chain is Cytoplasmic; it reads RFRRRDRDDLYSNDEDEVLVYR. The chain crosses the membrane as a helical span at residues 66 to 86; the sequence is ISFWLCTFTLAVAEGAAMLLP. Residues 87–117 are Extracellular-facing; that stretch reads VSIASNEVLLLYPNSYYVKWLNSSLIQGLWN. Residues 118–138 traverse the membrane as a helical segment; it reads HVFLFSNLSLFIFLPFVYLFS. The Cytoplasmic portion of the chain corresponds to 139–160; sequence ESTGFVGNKKGILPRVYETFTV. The helical transmembrane segment at 161–181 threads the bilayer; that stretch reads FMLMAIIVLVLTAVLSAVFGI. Topologically, residues 182-194 are extracellular; the sequence is EKLQFFWFLNLGS. A helical membrane pass occupies residues 195–215; it reads VHLPFLYSCVSFLGVMLMLIC. Residues 216-341 are Cytoplasmic-facing; sequence TPYGFVRLFG…LRTSSTFQRT (126 aa). The helical transmembrane segment at 342–362 threads the bilayer; that stretch reads FVYPLAMLLLLFCTAVTILLV. Residues 363-395 are Extracellular-facing; that stretch reads VQNTLELLIGIKALPLSTRQFALGISSLSKLGP. The chain crosses the membrane as a helical span at residues 396–416; that stretch reads FGAGLEVCLIFYLGATSVVGF. Residues 417–433 are Cytoplasmic-facing; it reads YSMPFMRKVCPKRRQTS. Residues 434-454 form a helical membrane-spanning segment; that stretch reads LPQLMLNCGFMLVLSSALPLL. Residues 455-468 lie on the Extracellular side of the membrane; it reads SRIIGITNFDLLGD. A helical transmembrane segment spans residues 469–489; sequence FGAIEWLGNFQIVLLYNLVFG. Over 490-527 the chain is Cytoplasmic; that stretch reads TTTALCLANKFTATVRRELRARLVENYVLFTNYISFIN.

Belongs to the LIMR family. In the ovary, detected in germline stem cells and their progeny. Also detected in the somatic follicular epithelium.

Its subcellular location is the cell membrane. Functionally, required during oogenesis to promote self-renewal of germline stem cells, probably by enhancing BMP signaling activity. The protein is Protein Lilipod of Drosophila melanogaster (Fruit fly).